The chain runs to 82 residues: Small ribosomal subunit protein bS16 (82 aa).

The protein belongs to the bacterial ribosomal protein bS16 family.

This chain is Small ribosomal subunit protein bS16, found in Haemophilus ducreyi (strain 35000HP / ATCC 700724).